A 381-amino-acid chain; its full sequence is Tryptophan--tRNA ligase (381 aa).

Positions 82–90 (PSLGMHIGH) match the 'HIGH' region motif. Positions 254-258 (KMSSS) match the 'KMSKS' region motif.

Belongs to the class-I aminoacyl-tRNA synthetase family.

The protein resides in the cytoplasm. The enzyme catalyses tRNA(Trp) + L-tryptophan + ATP = L-tryptophyl-tRNA(Trp) + AMP + diphosphate + H(+). This is Tryptophan--tRNA ligase from Sulfolobus acidocaldarius (strain ATCC 33909 / DSM 639 / JCM 8929 / NBRC 15157 / NCIMB 11770).